The following is a 58-amino-acid chain: uncharacterized protein (58 aa).

Its subcellular location is the plastid. The protein resides in the chloroplast. This is an uncharacterized protein from Porphyra purpurea (Red seaweed).